Reading from the N-terminus, the 149-residue chain is Transcriptional repressor NrdR (149 aa).

A zinc finger lies at 3 to 34 (CPFCSTEETKVIDSRLVSEGYQVRRRRECGNC). The 91-residue stretch at 49-139 (PKVIKNDGTR…VYLSFDDINQ (91 aa)) folds into the ATP-cone domain.

This sequence belongs to the NrdR family. It depends on Zn(2+) as a cofactor.

In terms of biological role, negatively regulates transcription of bacterial ribonucleotide reductase nrd genes and operons by binding to NrdR-boxes. The chain is Transcriptional repressor NrdR from Pasteurella multocida (strain Pm70).